Consider the following 611-residue polypeptide: CRS2-associated factor 2, chloroplastic (611 aa).

Residues 1–58 (MPPPPPQRPASSHVGRANLFSASPPPLSNRRYPHHRSLPLPPVSPRRRDPKKHSQQPS) constitute a chloroplast transit peptide. The disordered stretch occupies residues 1-72 (MPPPPPQRPA…TDSGPTRTVT (72 aa)). The span at 55-72 (QQPSQEEPTDSGPTRTVT) shows a compositional bias: polar residues. CRM domains are found at residues 232–328 (EPLT…TRPR) and 350–446 (DGFT…YSKP). Residues 486–509 (KMFKLWKSAVDSSLALLLDDAEAN) are CRS2 binding. The interval 554 to 578 (MNDEPETSVAGNEEGQLEQSPDLRD) is disordered.

In terms of assembly, interacts with CRS2 and RNA. Part of large ribonucleo-protein complexes that include group IIB introns, CRS2 and CAF2.

The protein resides in the plastid. It is found in the chloroplast stroma. Functionally, required for the splicing of group IIB introns in chloroplasts. Forms splicing particles with CRS2. Interacts with RNA and confers intron specificity of the splicing particles. This Zea mays (Maize) protein is CRS2-associated factor 2, chloroplastic (CAF2).